The sequence spans 379 residues: uncharacterized protein (379 aa).

Disordered stretches follow at residues 1-20 (MLPQ…PVGP), 227-290 (VSQR…LQGH), and 331-371 (PGCA…RAGH). The span at 7–20 (QVVHGVQDGPPVGP) shows a compositional bias: low complexity. The segment covering 249 to 261 (GCKDPRVRKEPGR) has biased composition (basic and acidic residues).

This is an uncharacterized protein from Dryophytes versicolor (chameleon treefrog).